A 332-amino-acid chain; its full sequence is Ferredoxin--NADP reductase (332 aa).

8 residues coordinate FAD: T20, E39, Q47, Y52, V92, F126, D288, and T329.

This sequence belongs to the ferredoxin--NADP reductase type 2 family. In terms of assembly, homodimer. It depends on FAD as a cofactor.

It carries out the reaction 2 reduced [2Fe-2S]-[ferredoxin] + NADP(+) + H(+) = 2 oxidized [2Fe-2S]-[ferredoxin] + NADPH. The sequence is that of Ferredoxin--NADP reductase from Geobacillus kaustophilus (strain HTA426).